A 247-amino-acid chain; its full sequence is Uridylate kinase (247 aa).

15 to 18 provides a ligand contact to ATP; the sequence is KLSG. The interval 23-28 is involved in allosteric activation by GTP; that stretch reads GEEGFG. Gly-57 contributes to the UMP binding site. 2 residues coordinate ATP: Gly-58 and Arg-62. Residues Asp-77 and 138-145 each bind UMP; that span reads TGNPFFTT. Residues Thr-165, Tyr-171, and Asp-174 each contribute to the ATP site.

This sequence belongs to the UMP kinase family. As to quaternary structure, homohexamer.

Its subcellular location is the cytoplasm. It catalyses the reaction UMP + ATP = UDP + ADP. Its pathway is pyrimidine metabolism; CTP biosynthesis via de novo pathway; UDP from UMP (UMPK route): step 1/1. Its activity is regulated as follows. Allosterically activated by GTP. Inhibited by UTP. Its function is as follows. Catalyzes the reversible phosphorylation of UMP to UDP. This chain is Uridylate kinase, found in Pseudoalteromonas atlantica (strain T6c / ATCC BAA-1087).